The following is a 134-amino-acid chain: Methylglyoxal synthase (134 aa).

In terms of domain architecture, MGS-like spans 1–134; the sequence is MHIALIAHDE…DWRDLRRNDE (134 aa). Substrate contacts are provided by residues histidine 8, lysine 12, 34 to 37, and 54 to 55; these read TGTT and SG. Aspartate 60 serves as the catalytic Proton donor/acceptor. Histidine 87 is a binding site for substrate.

The protein belongs to the methylglyoxal synthase family.

The catalysed reaction is dihydroxyacetone phosphate = methylglyoxal + phosphate. Functionally, catalyzes the formation of methylglyoxal from dihydroxyacetone phosphate. The sequence is that of Methylglyoxal synthase from Listeria innocua serovar 6a (strain ATCC BAA-680 / CLIP 11262).